The following is a 339-amino-acid chain: Probable thylakoid lumen protein sll0997 (339 aa).

A signal peptide spans 1 to 26 (MAPYQSFHIGLLGLALASVWPLSACA).

Its subcellular location is the cellular thylakoid lumen. The sequence is that of Probable thylakoid lumen protein sll0997 from Synechocystis sp. (strain ATCC 27184 / PCC 6803 / Kazusa).